The following is a 277-amino-acid chain: Phosphonates import ATP-binding protein PhnC (277 aa).

The ABC transporter domain occupies 3 to 251 (IKLDKVSARH…RLQALYAQHL (249 aa)). An ATP-binding site is contributed by 40–47 (GPSGAGKT).

The protein belongs to the ABC transporter superfamily. Phosphonates importer (TC 3.A.1.9.1) family. The complex is composed of two ATP-binding proteins (PhnC), two transmembrane proteins (PhnE) and a solute-binding protein (PhnD).

It is found in the cell inner membrane. It catalyses the reaction phosphonate(out) + ATP + H2O = phosphonate(in) + ADP + phosphate + H(+). In terms of biological role, part of the ABC transporter complex PhnCDE involved in phosphonates import. Responsible for energy coupling to the transport system. This Polaromonas sp. (strain JS666 / ATCC BAA-500) protein is Phosphonates import ATP-binding protein PhnC.